The following is a 406-amino-acid chain: Angiopoietin-related protein 4 (406 aa).

An N-terminal signal peptide occupies residues 1 to 25; that stretch reads MSGAPTAGAALMLCAATAVLLSAQG. A coiled-coil region spans residues 100–143; the sequence is EVLHSLQTQLKAQNSRIQQLFHKVAQQQRHLEKQHLRIQHLQSQ. N-linked (GlcNAc...) asparagine glycosylation occurs at Asn-177. The region spanning 179–401 is the Fibrinogen C-terminal domain; sequence SRLHRLPRDC…ATTMLIQPMA (223 aa). 2 cysteine pairs are disulfide-bonded: Cys-188–Cys-216 and Cys-341–Cys-354.

Homooligomer; disulfide-linked via Cys residues in the N-terminal part of the protein. The homooligomer undergoes proteolytic processing to release the ANGPTL4 C-terminal chain, which circulates as a monomer. The homooligomer unprocessed form is able to interact with the extracellular matrix. Post-translationally, N-glycosylated. Forms disulfide-linked dimers and tetramers. In terms of processing, cleaved into a smaller N-terminal chain and a larger chain that contains the fibrinogen C-terminal domain; both cleaved and uncleaved forms are detected in the extracellular space. The cleaved form is not present within the cell. Detected in blood plasma (at protein level). Detected in liver. Detected in white fat tissue and placenta. Expressed at high levels in the placenta, heart, liver, muscle, pancreas and lung but expressed poorly in the brain and kidney.

It is found in the secreted. Its subcellular location is the extracellular space. It localises to the extracellular matrix. Mediates inactivation of the lipoprotein lipase LPL, and thereby plays a role in the regulation of triglyceride clearance from the blood serum and in lipid metabolism. May also play a role in regulating glucose homeostasis and insulin sensitivity. Inhibits proliferation, migration, and tubule formation of endothelial cells and reduces vascular leakage. Upon heterologous expression, inhibits the adhesion of endothelial cell to the extracellular matrix (ECM), and inhibits the reorganization of the actin cytoskeleton, formation of actin stress fibers and focal adhesions in endothelial cells that have adhered to ANGPTL4-containing ECM (in vitro). Depending on context, may modulate tumor-related angiogenesis. In terms of biological role, mediates inactivation of the lipoprotein lipase LPL, and thereby plays an important role in the regulation of triglyceride clearance from the blood serum and in lipid metabolism. Has higher activity in LPL inactivation than the uncleaved protein. The protein is Angiopoietin-related protein 4 (ANGPTL4) of Homo sapiens (Human).